Here is an 81-residue protein sequence, read N- to C-terminus: Photosystem I iron-sulfur center (81 aa).

4Fe-4S ferredoxin-type domains lie at 1-31 and 39-68; these read MSHS…MVPW and IASS…IRVY. [4Fe-4S] cluster contacts are provided by Cys11, Cys14, Cys17, Cys21, Cys48, Cys51, Cys54, and Cys58.

In terms of assembly, the cyanobacterial PSI reaction center is composed of one copy each of PsaA,B,C,D,E,F,I,J,K,L,M and X, and forms trimeric complexes. [4Fe-4S] cluster serves as cofactor.

It is found in the cellular thylakoid membrane. It catalyses the reaction reduced [plastocyanin] + hnu + oxidized [2Fe-2S]-[ferredoxin] = oxidized [plastocyanin] + reduced [2Fe-2S]-[ferredoxin]. In terms of biological role, apoprotein for the two 4Fe-4S centers FA and FB of photosystem I (PSI); essential for photochemical activity. FB is the terminal electron acceptor of PSI, donating electrons to ferredoxin. The C-terminus interacts with PsaA/B/D and helps assemble the protein into the PSI complex. Required for binding of PsaD and PsaE to PSI. PSI is a plastocyanin/cytochrome c6-ferredoxin oxidoreductase, converting photonic excitation into a charge separation, which transfers an electron from the donor P700 chlorophyll pair to the spectroscopically characterized acceptors A0, A1, FX, FA and FB in turn. The chain is Photosystem I iron-sulfur center from Microcystis aeruginosa (strain NIES-843 / IAM M-2473).